Reading from the N-terminus, the 600-residue chain is MVNNMTDLTAQEPAWQTRDHLDDPVIGELRNRFGPDAFTVQATRTGVPVVWIKREQLLEVGDFLKKLPKPYVMLFDLHGMDERLRTHREGLPAADFSVFYHLISIDRNRDIMLKVALAENDLHVPTFTKLFPNANWYERETWDLFGITFDGHPNLRRIMMPQTWKGHPLRKDYPARATEFSPFELTKAKQDLEMEALTFKPEEWGMKRGTENEDFMFLNLGPNHPSAHGAFRIVLQLDGEEIVDCVPDIGYHHRGAEKMGERQSWHSYIPYTDRIEYLGGCVNEMPYVLAVEKLAGITVPDRVNVIRVMLSELFRINSHLLYISTFIQDVGAMTPVFFAFTDRQKIYDLVEAITGFRMHPAWFRIGGVAHDLPRGWDRLLREFLDWMPKRLASYEKAALQNTILKGRSQGVAAYGAKEALEWGTTGAGLRATGIDFDVRKARPYSGYENFDFEIPVGGGISDCYTRVMLKVEELRQSLRILEQCLNNMPEGPFKADHPLTTPPPKERTLQHIETLITHFLQVSWGPVMPANESFQMVEATKGINSYYLTSDGSTMSYRTRIRTPSYAHLQQIPAAIRGSLVSDLIVYLGSIDFVMSDVDR.

The tract at residues 1 to 190 is NADH dehydrogenase I subunit C; sequence MVNNMTDLTA…SPFELTKAKQ (190 aa). Positions 214-600 are NADH dehydrogenase I subunit D; it reads DFMFLNLGPN…IDFVMSDVDR (387 aa).

It in the N-terminal section; belongs to the complex I 30 kDa subunit family. The protein in the C-terminal section; belongs to the complex I 49 kDa subunit family. As to quaternary structure, NDH-1 is composed of 13 different subunits. Subunits NuoB, CD, E, F, and G constitute the peripheral sector of the complex.

It is found in the cell inner membrane. The enzyme catalyses a quinone + NADH + 5 H(+)(in) = a quinol + NAD(+) + 4 H(+)(out). Its function is as follows. NDH-1 shuttles electrons from NADH, via FMN and iron-sulfur (Fe-S) centers, to quinones in the respiratory chain. The immediate electron acceptor for the enzyme in this species is believed to be ubiquinone. Couples the redox reaction to proton translocation (for every two electrons transferred, four hydrogen ions are translocated across the cytoplasmic membrane), and thus conserves the redox energy in a proton gradient. This is NADH-quinone oxidoreductase subunit C/D from Escherichia coli O127:H6 (strain E2348/69 / EPEC).